Consider the following 66-residue polypeptide: Type 3 secretion system chaperone YscE (66 aa).

It belongs to the YscE family. Component of the heterodimeric YscE-YscG chaperone. The YscE-YscG chaperone forms a stable ternary complex with YscF/SctF. YscE interacts with YscG, but makes very little direct contact with YscF. Homodimer in solution.

The protein localises to the cytoplasm. Functionally, chaperone of the type III secretion system (T3SS), also called injectisome, which is used to inject bacterial effector proteins into eukaryotic host cells. Along with YscG, prevents premature polymerization of the YscF/SctF needle protein within the cytoplasm. Is also required for stable expression of cytosolic YscF and for YscF secretion. Likely plays a role in targeting YscF present in the cytosolic YscEFG complex to the T3SS apparatus. Required for Yop secretion. This chain is Type 3 secretion system chaperone YscE, found in Yersinia pestis.